A 528-amino-acid chain; its full sequence is UDP-glucuronosyltransferase 2B30 (528 aa).

The first 23 residues, 1 to 23 (MSMKWTSALLLIQLSCYLSSGNC), serve as a signal peptide directing secretion. Position 135 is an N6-succinyllysine (Lys-135). Asn-315 carries an N-linked (GlcNAc...) asparagine glycan. The chain crosses the membrane as a helical span at residues 493–513 (VIGFLLACVATVIFIITKCLF).

This sequence belongs to the UDP-glycosyltransferase family. As to expression, expressed in several tissues, including prostate, testis, mammary gland, kidney, adrenals and intestine.

The protein localises to the microsome membrane. It is found in the endoplasmic reticulum membrane. It catalyses the reaction glucuronate acceptor + UDP-alpha-D-glucuronate = acceptor beta-D-glucuronoside + UDP + H(+). Functionally, UDPGTs are of major importance in the conjugation and subsequent elimination of potentially toxic xenobiotics and endogenous compounds. This isozyme has glucuronidating capacity on testosterone, dihydrotestosterone, 5-alpha-androstane-3-alpha,17-beta-diol, androsterone, oestradiol, tetrahydroaldosterone and tetrahydrocortisone. This enzyme is essential to inactivation of several steroids. The sequence is that of UDP-glucuronosyltransferase 2B30 (UGT2B30) from Macaca fascicularis (Crab-eating macaque).